Consider the following 204-residue polypeptide: Tic20 family protein Ycf60 (204 aa).

A run of 4 helical transmembrane segments spans residues 5–25 (LPSL…SFII), 87–107 (LMPL…IFFI), 133–153 (ILLF…PIEF), and 159–179 (GLMM…YSII).

It belongs to the Tic20 family.

It localises to the plastid. The protein resides in the chloroplast membrane. The chain is Tic20 family protein Ycf60 (ycf60) from Gracilaria tenuistipitata var. liui (Red alga).